The following is a 204-amino-acid chain: Protease (204 aa).

Residues His54, Asp71, and Cys121 contribute to the active site.

This sequence belongs to the peptidase C5 family. As to quaternary structure, interacts with protease cofactor pVI-C; this interaction is necessary for protease activation.

The protein resides in the virion. It localises to the host nucleus. The catalysed reaction is Cleaves proteins of the adenovirus and its host cell at two consensus sites: -Yaa-Xaa-Gly-Gly-|-Xaa- and -Yaa-Xaa-Gly-Xaa-|-Gly- (in which Yaa is Met, Ile or Leu, and Xaa is any amino acid).. With respect to regulation, requires DNA and protease cofactor for maximal activation. Inside nascent virions, becomes partially activated by binding to the viral DNA, allowing it to cleave the cofactor that binds to the protease and fully activates it. Actin, like the viral protease cofactor, seems to act as a cofactor in the cleavage of cytokeratin 18 and of actin itself. Functionally, cleaves viral precursor proteins (pTP, pIIIa, pVI, pVII, pVIII, and pX) inside newly assembled particles giving rise to mature virions. Protease complexed to its cofactor slides along the viral DNA to specifically locate and cleave the viral precursors. Mature virions have a weakened organization compared to the unmature virions, thereby facilitating subsequent uncoating. Without maturation, the particle lacks infectivity and is unable to uncoat. Late in adenovirus infection, in the cytoplasm, may participate in the cytoskeleton destruction. Cleaves host cell cytoskeletal keratins K7 and K18. This chain is Protease, found in Frog adenovirus 1 (strain ATCC VR-896) (FrAdV-1).